Here is a 185-residue protein sequence, read N- to C-terminus: Ribosome-recycling factor (185 aa).

The disordered stretch occupies residues Asp145–Thr164.

Belongs to the RRF family.

It is found in the cytoplasm. In terms of biological role, responsible for the release of ribosomes from messenger RNA at the termination of protein biosynthesis. May increase the efficiency of translation by recycling ribosomes from one round of translation to another. This chain is Ribosome-recycling factor, found in Mycobacterium sp. (strain JLS).